We begin with the raw amino-acid sequence, 103 residues long: uncharacterized protein (103 aa).

Residues 1–21 form the signal peptide; the sequence is MTGFKVSSFFYILALSRFFNA.

This is an uncharacterized protein from Saccharomyces cerevisiae (strain ATCC 204508 / S288c) (Baker's yeast).